A 434-amino-acid chain; its full sequence is GTPase Obg (434 aa).

An Obg domain is found at 1 to 158 (MFIDRAKIYV…RWLYLELKLL (158 aa)). The OBG-type G domain occupies 159-328 (ADVGLLGLPN…LLELMEKYVK (170 aa)). GTP-binding positions include 165–172 (GLPNAGKS), 190–194 (FTTKT), 211–214 (DIPG), 280–283 (NKID), and 309–311 (SAK). Mg(2+) is bound by residues serine 172 and threonine 192. The 79-residue stretch at 347-425 (KQENKKQEIP…IGNYVFKYNS (79 aa)) folds into the OCT domain.

Belongs to the TRAFAC class OBG-HflX-like GTPase superfamily. OBG GTPase family. As to quaternary structure, monomer. It depends on Mg(2+) as a cofactor.

It is found in the cytoplasm. An essential GTPase which binds GTP, GDP and possibly (p)ppGpp with moderate affinity, with high nucleotide exchange rates and a fairly low GTP hydrolysis rate. Plays a role in control of the cell cycle, stress response, ribosome biogenesis and in those bacteria that undergo differentiation, in morphogenesis control. The chain is GTPase Obg from Dictyoglomus turgidum (strain DSM 6724 / Z-1310).